A 75-amino-acid chain; its full sequence is Rugosin-LK2 (75 aa).

Residues methionine 1–glycine 24 form the signal peptide. Positions glutamate 25–glutamate 40 are excised as a propeptide.

In terms of tissue distribution, expressed by the skin glands.

It localises to the secreted. In terms of biological role, has antimicrobial activity against Gram-positive bacteria S.aureus ATCC 2592 (MIC=10.0 uM), S.aureus ATCC 43300 (MIC=10.0 uM) and B.subtilis (MIC=30.0 uM), against Gram-negative bacteria E.coli ML-35P (MIC=10.0 uM), P.aeruginosa PA01 (MIC=2.5 uM) and P.aeruginosa ATCC 27853 (MIC=2.5 uM) and against fungus C.albicans ATCC 2002 (MIC=10.0 uM). The sequence is that of Rugosin-LK2 from Limnonectes kuhlii (Kuhl's Creek frog).